A 55-amino-acid polypeptide reads, in one-letter code: Large ribosomal subunit protein uL15 (55 aa).

This sequence belongs to the universal ribosomal protein uL15 family. Part of the 50S ribosomal subunit.

Functionally, binds to the 23S rRNA. In Lactococcus lactis subsp. cremoris (Streptococcus cremoris), this protein is Large ribosomal subunit protein uL15 (rplO).